The primary structure comprises 285 residues: Protoheme IX farnesyltransferase (285 aa).

The next 9 membrane-spanning stretches (helical) occupy residues 8 to 28 (ITKPGIIIGNSTLITGGFLFA), 36 to 56 (YVLFIYTILGASLVIASACVF), 80 to 100 (LLPVFSVFNFAIFLGVLGLSI), 107 to 127 (FISMSLAVFGFFIYVVLYTMF), 133 to 153 (FYSTFIGSFSGSTPSVIGYTA), 163 to 183 (ILLFVIVIFWQMSHFYSISIM), 209 to 229 (IFFYVLNFSFFSSLFTFLGYL), 232 to 252 (NFLLLSSIVNFYWSFLSYSNI), and 265 to 285 (FYFSIIVIVFFNFLISIDVFF).

It belongs to the UbiA prenyltransferase family. Protoheme IX farnesyltransferase subfamily.

Its subcellular location is the cell membrane. The enzyme catalyses heme b + (2E,6E)-farnesyl diphosphate + H2O = Fe(II)-heme o + diphosphate. Its pathway is porphyrin-containing compound metabolism; heme O biosynthesis; heme O from protoheme: step 1/1. Converts heme B (protoheme IX) to heme O by substitution of the vinyl group on carbon 2 of heme B porphyrin ring with a hydroxyethyl farnesyl side group. This is Protoheme IX farnesyltransferase from Buchnera aphidicola subsp. Acyrthosiphon pisum (strain Tuc7).